We begin with the raw amino-acid sequence, 535 residues long: Probable monogalactosyldiacylglycerol synthase, chloroplastic (535 aa).

A chloroplast-targeting transit peptide spans 1–113 (MMQHSSSVTQ…KIPLGFASVG (113 aa)).

This sequence belongs to the glycosyltransferase 28 family.

The protein resides in the plastid. Its subcellular location is the chloroplast membrane. It carries out the reaction a 1,2-diacyl-sn-glycerol + UDP-alpha-D-galactose = a 1,2-diacyl-3-O-(beta-D-galactosyl)-sn-glycerol + UDP + H(+). Involved in the synthesis of the major structural component of photosynthetic membranes. This is Probable monogalactosyldiacylglycerol synthase, chloroplastic (MGD A) from Nicotiana tabacum (Common tobacco).